Reading from the N-terminus, the 147-residue chain is Hemoglobin subunit deltaH (147 aa).

Positions 3 to 147 constitute a Globin domain; sequence RLTDSEKAEV…MANALAHKYH (145 aa). Heme b contacts are provided by His64 and His93.

This sequence belongs to the globin family. Heterotetramer of two delta chains and two alpha chains. Red blood cells.

The chain is Hemoglobin subunit deltaH from Heterohyrax brucei (Yellow-spotted hyrax).